The chain runs to 339 residues: MEITLFDPIDAHLHVRENALLKAVLRYSSEPFSAAVIMPNLSKPLTDTPTTLEYEEEILNHSSNFKPLMSLYFNDDLTLEELQRAHEKGIRFLKLYPKGMTTNAQNGTSDLLGEKTLEILENAQKLGFILCIHAEQAGFCLDKEFLCHSVLETFALSFPKLKIIIEHLSDWRSIALIEKHANLYATLTLHHISMTLDDLLGGSLNPHCFCKPLIKTKKDQERLLSLALKAHPKISFGSDSAPHFISKKHSTSIPAGIFSAPILLPALCELFEKHNALENLQAFISDNAKKIYALDNLPAKKARLSKKPFIVPTHALCLNEKIAILRGGETLSWNLQEIA.

Residues H12 and H14 each coordinate Zn(2+). Residues 14-16 and N40 contribute to the substrate site; that span reads HVR. The Zn(2+) site is built by K94, H133, H167, and D239. Residue K94 is modified to N6-carboxylysine. A substrate-binding site is contributed by H133. The active site involves D239. Substrate is bound by residues H243 and A255.

It belongs to the metallo-dependent hydrolases superfamily. DHOase family. Class II DHOase subfamily. As to quaternary structure, homodimer. The cofactor is Zn(2+).

It catalyses the reaction (S)-dihydroorotate + H2O = N-carbamoyl-L-aspartate + H(+). The protein operates within pyrimidine metabolism; UMP biosynthesis via de novo pathway; (S)-dihydroorotate from bicarbonate: step 3/3. Catalyzes the reversible cyclization of carbamoyl aspartate to dihydroorotate. The sequence is that of Dihydroorotase from Helicobacter pylori (strain P12).